The sequence spans 860 residues: Leucine--tRNA ligase (860 aa).

The 'HIGH' region signature appears at 42-52 (PYPSGRLHMGH). The 'KMSKS' region motif lies at 619 to 623 (KMSKS). ATP is bound at residue Lys622.

It belongs to the class-I aminoacyl-tRNA synthetase family.

Its subcellular location is the cytoplasm. The catalysed reaction is tRNA(Leu) + L-leucine + ATP = L-leucyl-tRNA(Leu) + AMP + diphosphate. This Escherichia coli (strain SMS-3-5 / SECEC) protein is Leucine--tRNA ligase.